A 513-amino-acid chain; its full sequence is Arabinoxylan arabinofuranohydrolase (513 aa).

The first 26 residues, 1 to 26 (MRKKCSVCLWILVLLLSCLSGKSAYA), serve as a signal peptide directing secretion. Asp50 functions as the Proton acceptor in the catalytic mechanism. The active-site Proton donor is Glu251. Position 314 (Asn314) interacts with substrate. Residues 382-511 (NRVEAETFAW…LFNFDYWQFT (130 aa)) form the CBM6 domain. The Ca(2+) site is built by Glu385, Glu387, Asn409, Gln410, and Asp506.

It is found in the secreted. The catalysed reaction is Hydrolysis of terminal non-reducing alpha-L-arabinofuranoside residues in alpha-L-arabinosides.. Its pathway is glycan degradation; xylan degradation. Its function is as follows. Cleaves arabinose units from O-2- or O-3-monosubstituted xylose residues, thereby assisting in arabinoxylan (AX) and short-chain arabinoxylo-oligosaccharide (AXOS) degradation. Is more active on wheat bran AXOS than on wheat water-extractable AX and rye water-extractable AX. Does not display endoxylanase, xylosidase or arabinanase activity. The sequence is that of Arabinoxylan arabinofuranohydrolase (xynD) from Bacillus subtilis (strain 168).